A 259-amino-acid chain; its full sequence is Deoxyribose-phosphate aldolase (259 aa).

The active-site Proton donor/acceptor is the aspartate 101. Lysine 166 functions as the Schiff-base intermediate with acetaldehyde in the catalytic mechanism. Lysine 200 (proton donor/acceptor) is an active-site residue.

It belongs to the DeoC/FbaB aldolase family. DeoC type 2 subfamily.

Its subcellular location is the cytoplasm. It catalyses the reaction 2-deoxy-D-ribose 5-phosphate = D-glyceraldehyde 3-phosphate + acetaldehyde. It participates in carbohydrate degradation; 2-deoxy-D-ribose 1-phosphate degradation; D-glyceraldehyde 3-phosphate and acetaldehyde from 2-deoxy-alpha-D-ribose 1-phosphate: step 2/2. In terms of biological role, catalyzes a reversible aldol reaction between acetaldehyde and D-glyceraldehyde 3-phosphate to generate 2-deoxy-D-ribose 5-phosphate. This chain is Deoxyribose-phosphate aldolase, found in Glaesserella parasuis serovar 5 (strain SH0165) (Haemophilus parasuis).